The chain runs to 237 residues: Ribonuclease PH (237 aa).

Phosphate contacts are provided by residues R86 and 124–126 (GTR).

This sequence belongs to the RNase PH family. As to quaternary structure, homohexameric ring arranged as a trimer of dimers.

It carries out the reaction tRNA(n+1) + phosphate = tRNA(n) + a ribonucleoside 5'-diphosphate. Its function is as follows. Phosphorolytic 3'-5' exoribonuclease that plays an important role in tRNA 3'-end maturation. Removes nucleotide residues following the 3'-CCA terminus of tRNAs; can also add nucleotides to the ends of RNA molecules by using nucleoside diphosphates as substrates, but this may not be physiologically important. Probably plays a role in initiation of 16S rRNA degradation (leading to ribosome degradation) during starvation. This Shewanella sp. (strain ANA-3) protein is Ribonuclease PH.